Here is a 137-residue protein sequence, read N- to C-terminus: Protein Turandot X (137 aa).

An N-terminal signal peptide occupies residues methionine 1–alanine 24.

It belongs to the Turandot family.

It is found in the secreted. A humoral factor that may play a role in stress tolerance. This chain is Protein Turandot X, found in Drosophila persimilis (Fruit fly).